Consider the following 130-residue polypeptide: Small ribosomal subunit protein uS9 (130 aa).

It belongs to the universal ribosomal protein uS9 family.

The sequence is that of Small ribosomal subunit protein uS9 from Sodalis glossinidius (strain morsitans).